The following is a 198-amino-acid chain: Ribonuclease HII (198 aa).

Residues 10-198 (QLVAGVDEVG…PVKRALGLAS (189 aa)) enclose the RNase H type-2 domain. Residues aspartate 16, glutamate 17, and aspartate 108 each contribute to the a divalent metal cation site.

Belongs to the RNase HII family. It depends on Mn(2+) as a cofactor. Mg(2+) is required as a cofactor.

The protein resides in the cytoplasm. It carries out the reaction Endonucleolytic cleavage to 5'-phosphomonoester.. Functionally, endonuclease that specifically degrades the RNA of RNA-DNA hybrids. The polypeptide is Ribonuclease HII (Escherichia fergusonii (strain ATCC 35469 / DSM 13698 / CCUG 18766 / IAM 14443 / JCM 21226 / LMG 7866 / NBRC 102419 / NCTC 12128 / CDC 0568-73)).